The following is a 359-amino-acid chain: Serine/threonine-protein kinase SAPK7 (359 aa).

The 257-residue stretch at 4-260 (YELLKDIGAG…IREIRNHPWF (257 aa)) folds into the Protein kinase domain. Residues 10–18 (IGAGNFGVA) and K33 each bind ATP. D123 acts as the Proton acceptor in catalysis. A disordered region spans residues 299–359 (EEARTPPRSS…VHASGEFQLS (61 aa)). Acidic residues predominate over residues 331–343 (EEQEEEEDAEDEY).

It belongs to the protein kinase superfamily. Ser/Thr protein kinase family. In terms of processing, may be phosphorylated. As to expression, weakly expressed in roots. Expressed in roots of young seedlings.

Its subcellular location is the cytoplasm. It is found in the nucleus. The enzyme catalyses L-seryl-[protein] + ATP = O-phospho-L-seryl-[protein] + ADP + H(+). It carries out the reaction L-threonyl-[protein] + ATP = O-phospho-L-threonyl-[protein] + ADP + H(+). Its activity is regulated as follows. Activated by hyperosmotic stress. May play a role in signal transduction of hyperosmotic response. The sequence is that of Serine/threonine-protein kinase SAPK7 (SAPK7) from Oryza sativa subsp. japonica (Rice).